The following is a 414-amino-acid chain: Thyroid hormone receptor beta-B (414 aa).

The segment at 1 to 59 (MPSSMSVRLFTASAAQRKKIQEGDCCVVLAGKTQGRFILIGAVARVSGYIPSYLDKDEL) is modulating. 2 consecutive NR C4-type zinc fingers follow at residues 60 to 80 (CVVC…CEGC) and 98 to 122 (CKYE…FKKC). The segment at residues 60-134 (CVVCGDKATG…VGMATDLVLD (75 aa)) is a DNA-binding region (nuclear receptor). An NR LBD domain is found at 170 to 414 (EEWELIQVVT…PPLFLEVFED (245 aa)).

Belongs to the nuclear hormone receptor family. NR1 subfamily.

The protein localises to the nucleus. High affinity receptor for triiodothyronine (T3). This chain is Thyroid hormone receptor beta-B (thrb-b), found in Xenopus laevis (African clawed frog).